A 101-amino-acid polypeptide reads, in one-letter code: Small ribosomal subunit protein uS14 (101 aa).

It belongs to the universal ribosomal protein uS14 family. As to quaternary structure, part of the 30S ribosomal subunit. Contacts proteins S3 and S10.

In terms of biological role, binds 16S rRNA, required for the assembly of 30S particles and may also be responsible for determining the conformation of the 16S rRNA at the A site. This chain is Small ribosomal subunit protein uS14, found in Cupriavidus pinatubonensis (strain JMP 134 / LMG 1197) (Cupriavidus necator (strain JMP 134)).